The sequence spans 286 residues: Leukocyte cell-derived chemotaxin 1 (286 aa).

The helical transmembrane segment at 29 to 49 threads the bilayer; sequence LVAFIAGAALLLFGGVGAFYL. The BRICHOS domain occupies 75–157; the sequence is DSAEGTIVEV…FCADLPIYWH (83 aa). A disulfide bridge connects residues C102 and C149. A propeptide spanning residues 166–169 is cleaved from the precursor; it reads RKRR. The segment covering 166–176 has biased composition (basic residues); that stretch reads RKRRSATRMRR. Positions 166 to 220 are disordered; that stretch reads RKRRSATRMRRQTSAGVNRQPARRRNSTASARDERPTGPEYNPENPYHQNQGSEG. A glycan (N-linked (GlcNAc...) asparagine) is linked at N191. 4 cysteine pairs are disulfide-bonded: C234-C238, C235-C275, C245-C269, and C249-C265.

This sequence belongs to the chondromodulin-1 family. After cleavage, the post-translationally modified ChM-I is secreted as a glycoprotein.

It is found in the secreted. Its subcellular location is the extracellular space. The protein localises to the extracellular matrix. It localises to the endomembrane system. In terms of biological role, bifunctional growth regulator. May contribute to the rapid growth of cartilage and vascular invasion prior to the replacement of cartilage by bone during endochondral bone development. Plays a role as antiangiogenic factor in cardiac valves to suppress neovascularization. This Danio rerio (Zebrafish) protein is Leukocyte cell-derived chemotaxin 1.